Consider the following 278-residue polypeptide: Sulfur carrier protein FdhD (278 aa).

The active-site Cysteine persulfide intermediate is C121. F260–R265 serves as a coordination point for Mo-bis(molybdopterin guanine dinucleotide).

This sequence belongs to the FdhD family.

Its subcellular location is the cytoplasm. Its function is as follows. Required for formate dehydrogenase (FDH) activity. Acts as a sulfur carrier protein that transfers sulfur from IscS to the molybdenum cofactor prior to its insertion into FDH. The chain is Sulfur carrier protein FdhD from Salmonella heidelberg (strain SL476).